The chain runs to 479 residues: Replication factor C large subunit (479 aa).

Residue Gly56–Thr63 coordinates ATP. Residues Leu435–Lys461 show a composition bias toward basic and acidic residues. The interval Leu435 to Gln479 is disordered.

The protein belongs to the activator 1 small subunits family. RfcL subfamily. Heteromultimer composed of small subunits (RfcS) and large subunits (RfcL).

Part of the RFC clamp loader complex which loads the PCNA sliding clamp onto DNA. The sequence is that of Replication factor C large subunit from Aeropyrum pernix (strain ATCC 700893 / DSM 11879 / JCM 9820 / NBRC 100138 / K1).